A 279-amino-acid polypeptide reads, in one-letter code: Tryptophan synthase alpha chain (279 aa).

Active-site proton acceptor residues include Glu50 and Asp61.

This sequence belongs to the TrpA family. Tetramer of two alpha and two beta chains.

The enzyme catalyses (1S,2R)-1-C-(indol-3-yl)glycerol 3-phosphate + L-serine = D-glyceraldehyde 3-phosphate + L-tryptophan + H2O. It participates in amino-acid biosynthesis; L-tryptophan biosynthesis; L-tryptophan from chorismate: step 5/5. In terms of biological role, the alpha subunit is responsible for the aldol cleavage of indoleglycerol phosphate to indole and glyceraldehyde 3-phosphate. The protein is Tryptophan synthase alpha chain of Mesorhizobium japonicum (strain LMG 29417 / CECT 9101 / MAFF 303099) (Mesorhizobium loti (strain MAFF 303099)).